Here is a 729-residue protein sequence, read N- to C-terminus: MFSWSYLMGLVMVATATLSLARPSYNIAEDTTLEPEDANSSGDDEDDNDGSEDFTNDNNHMRAPYWTNTEKLEKKLHAVPAANTVKFRCPAGGNPTPSMRWLKNGKEFKQEHRIGGFKVRSQHFSLIMESVVPSDEGNYTCIMENEYGSINHTYHLDVVERSPHRPILQAGLPANTTTKVGGDAEFVCKVYSDAQPHIQWIRHFELNGSKIGPDGHPYLKVLKAAGVNTTDKEIEVLYVRNVSFEDAGEYTCLAGNSTGISYHTAWLTVLPDEERELDSSSEYTEIAIYCVGGFLITCMIGTIMVCHMKGRGKKSDFSSPPAVHKLSKSLPLRRQVTVSADSSSSMNSNTPLVRITTRLSSNNDTHLLAGVSEYELPEDPKWEYPREKLTLGKPLGEGCFGQVVMAEAVGIDKDRPKDAATVAVKMLKDDATEKDLSDLVSEMEMMKMIGKHKNIINLLGACTQDGPLYVIVEYASKGNLREYLRTRRPPGMEYSFDINRIPEEQMTFKDLVSCTYQLARGMEYLASQKCIHRDLAARNVLVTETNVMKIADFGLARDINNIDYYKKTTNGRLPVKWMAPEALFDRVYTHQSDVWSFGVLMWEIFTLGGSPYPGIPVEELFKLLKEGHRMDKPGNCTNELYTMMTDCWRAVPSQRPTFKQLVEDLDRILTQTTNEEYLDLNNPLEQYSPSYPDTRSSCSSGDDSVFSPDAMPYDPCLPKSQHTNGTIKT.

The N-terminal stretch at 1–21 is a signal peptide; sequence MFSWSYLMGLVMVATATLSLA. Over 22-285 the chain is Extracellular; it reads RPSYNIAEDT…ELDSSSEYTE (264 aa). The disordered stretch occupies residues 29–62; the sequence is EDTTLEPEDANSSGDDEDDNDGSEDFTNDNNHMR. Residues 31–55 show a composition bias toward acidic residues; that stretch reads TTLEPEDANSSGDDEDDNDGSEDFT. Residue N39 is glycosylated (N-linked (GlcNAc...) asparagine). 2 consecutive Ig-like C2-type domains span residues 64-157 and 166-268; these read PYWT…YHLD and PILQ…AWLT. The tract at residues 71-88 is heparin-binding; that stretch reads KLEKKLHAVPAANTVKFR. C89 and C141 are joined by a disulfide. 7 N-linked (GlcNAc...) asparagine glycosylation sites follow: N138, N151, N175, N207, N228, N241, and N256. C188 and C252 are disulfide-bonded. Residues 286 to 306 traverse the membrane as a helical segment; the sequence is IAIYCVGGFLITCMIGTIMVC. The Cytoplasmic portion of the chain corresponds to 307 to 729; that stretch reads HMKGRGKKSD…SQHTNGTIKT (423 aa). At Y374 the chain carries Phosphotyrosine; by autocatalysis. In terms of domain architecture, Protein kinase spans 389-678; sequence LTLGKPLGEG…LTQTTNEEYL (290 aa). ATP is bound by residues 395–403, K425, 473–475, and N479; these read LGEGCFGQV and EYA. Position 494 is a phosphotyrosine; by autocatalysis (Y494). D534 acts as the Proton acceptor in catalysis. Y564, Y565, and Y677 each carry phosphotyrosine; by autocatalysis. A disordered region spans residues 683–729; that stretch reads PLEQYSPSYPDTRSSCSSGDDSVFSPDAMPYDPCLPKSQHTNGTIKT. Residues 693–707 are compositionally biased toward low complexity; it reads DTRSSCSSGDDSVFS. Positions 720–729 are enriched in polar residues; that stretch reads SQHTNGTIKT.

The protein belongs to the protein kinase superfamily. Tyr protein kinase family. Fibroblast growth factor receptor subfamily. As to quaternary structure, monomer. Homodimer after ligand binding. Autophosphorylated. Binding of FGF family members together with heparan sulfate proteoglycan or heparin promotes receptor dimerization and autophosphorylation on tyrosine residues. Autophosphorylation occurs in trans between the two FGFR molecules present in the dimer. In terms of processing, N-glycosylated in the endoplasmic reticulum. The N-glycan chains undergo further maturation to an Endo H-resistant form in the Golgi apparatus. Post-translationally, ubiquitinated. FGFR2 is rapidly ubiquitinated after autophosphorylation, leading to internalization and degradation. Subject to degradation both in lysosomes and by the proteasome.

It is found in the cell membrane. It localises to the golgi apparatus. The protein localises to the cytoplasmic vesicle. The enzyme catalyses L-tyrosyl-[protein] + ATP = O-phospho-L-tyrosyl-[protein] + ADP + H(+). Its activity is regulated as follows. Present in an inactive conformation in the absence of bound ligand. Ligand binding leads to dimerization and activation by autophosphorylation on tyrosine residues. Its function is as follows. Tyrosine-protein kinase that acts as a cell-surface receptor for fibroblast growth factors and plays an essential role in the regulation of cell proliferation, differentiation, migration and apoptosis, and in the regulation of embryonic development. Required for normal embryonic patterning, limb bud development, lung morphogenesis, osteogenesis and skin development. Plays an essential role in the regulation of osteoblast differentiation, proliferation and apoptosis, and is required for normal skeleton development. Promotes cell proliferation in keratinocytes and immature osteoblasts, but promotes apoptosis in differentiated osteoblasts. Phosphorylates PLCG1, FRS2 and PAK4. Ligand binding leads to the activation of several signaling cascades. Activation of PLCG1 leads to the production of the cellular signaling molecules diacylglycerol and inositol 1,4,5-trisphosphate. Phosphorylation of FRS2 triggers recruitment of GRB2, GAB1, PIK3R1 and SOS1, and mediates activation of RAS, MAPK1/ERK2, MAPK3/ERK1 and the MAP kinase signaling pathway, as well as of the AKT1 signaling pathway. FGFR2 signaling is down-regulated by ubiquitination, internalization and degradation. Mutations that lead to constitutive kinase activation or impair normal FGFR2 maturation, internalization and degradation lead to aberrant signaling. Over-expressed FGFR2 promotes activation of STAT1. The polypeptide is Fibroblast growth factor receptor 2 (FGFR2) (Notophthalmus viridescens (Eastern newt)).